The chain runs to 60 residues: Large ribosomal subunit protein bL32 (60 aa).

The protein belongs to the bacterial ribosomal protein bL32 family.

In Clostridium perfringens (strain ATCC 13124 / DSM 756 / JCM 1290 / NCIMB 6125 / NCTC 8237 / Type A), this protein is Large ribosomal subunit protein bL32.